A 694-amino-acid polypeptide reads, in one-letter code: Putative ankyrin repeat protein RBE_0921 (694 aa).

ANK repeat units follow at residues 122-151 (LGKTPLQYAIINDKPELAKLLIDAGANINV), 155-185 (NGRNLFELAMYNSASDQTFELLLKTNININS), 216-245 (FNRTLLHQAAERNNIKKAQISINHNINVEA), 249-275 (TGETALHMLKTSKMAKILLKAGSNTEA), 279-317 (LGRTPLHNAILQANKRQVNIKNIHNIVLKLIKSGANPNA), 321-350 (YGFTPLEYAIRINDSKIFKLLIKNNAKFKK), 351-382 (NRYELFCQALESGNLTATKYLFKKEFLNNIND), 384-413 (NGQNYLYYIATGGNKEVLEYLVKKNHDNGK), 423-452 (QRNTPIHIAAQNGQFEIIKNFQKLGFDINA), and 456-485 (DGETVLHILARAQNGEMIKELIKLGADINI).

This Rickettsia bellii (strain RML369-C) protein is Putative ankyrin repeat protein RBE_0921.